The chain runs to 508 residues: MSSISIDEKLKDPESVQNKEILDVDVGDLSPKGVDAAFNYALDVDYDEIDPETERRLVRKIDCTIFPVMCLVYCIQFLDKTSNSYAVIMGLKEDLKMEGQMYSWSGTAFYLGYLVFEFPASLLLQRFPLSKTLCVFLVIWGFLLCMTSVANYPGFIALRVLLGMMESAASPGFILLTAQWYKRSEQQLRTSVWVAFNGLGQILGSCMAYGLAKRTSLPMRGWKLIFIICGVLAIFLGFVILAVVPDNPFKAWFLTEEDRKLVVKRLRANKQGVGNNHFKLYQFKETMLDIRTWIMFVSSVLLNIPNGGIGTFSSLLIKGTMGYDTLQTLLMGLPAGACEFGGLIAFGFLSLFIHKRMVLATITTCIALIGSCLLSFAGPPRAQLAGYYLLMVSPGAMIVMFAIISSNASGYTKKVTVGVIYLIGYCVGNLIGPQTFKAADAPEYMPAKNTMVGCYAATLVTFPALYYVNWRENKRRDQLAAEGKIEHRPNAEFEDLTDFENLDFRYTL.

12 helical membrane passes run 65–87 (IFPV…SYAV), 104–124 (WSGT…SLLL), 136–156 (FLVI…PGFI), 160–180 (VLLG…TAQW), 192–212 (VWVA…YGLA), 224–244 (LIFI…LAVV), 292–312 (TWIM…IGTF), 333–353 (LPAG…SLFI), 357–377 (MVLA…LSFA), 384–404 (LAGY…FAII), 416–436 (TVGV…PQTF), and 450–470 (TMVG…YVNW).

Belongs to the major facilitator superfamily. Allantoate permease family.

The protein resides in the endoplasmic reticulum. It is found in the golgi apparatus. Its subcellular location is the membrane. This is an uncharacterized protein from Schizosaccharomyces pombe (strain 972 / ATCC 24843) (Fission yeast).